The primary structure comprises 557 residues: Formate--tetrahydrofolate ligase 2 (557 aa).

Residue 66–73 (TPAGEGKT) coordinates ATP.

Belongs to the formate--tetrahydrofolate ligase family.

It carries out the reaction (6S)-5,6,7,8-tetrahydrofolate + formate + ATP = (6R)-10-formyltetrahydrofolate + ADP + phosphate. It functions in the pathway one-carbon metabolism; tetrahydrofolate interconversion. The sequence is that of Formate--tetrahydrofolate ligase 2 from Streptococcus pyogenes serotype M3 (strain ATCC BAA-595 / MGAS315).